The chain runs to 459 residues: Interleukin-7 receptor subunit alpha (459 aa).

An N-terminal signal peptide occupies residues 1-20; that stretch reads MTILGTTFGMVFSLLQVVSG. Residues 21–239 are Extracellular-facing; the sequence is ESGYAQNGDL…EINNSSGEMD (219 aa). A disulfide bond links C42 and C57. N-linked (GlcNAc...) asparagine glycosylation is found at N49 and N65. 2 cysteine pairs are disulfide-bonded: C74/C82 and C108/C118. The 101-residue stretch at 131 to 231 folds into the Fibronectin type-III domain; that stretch reads APFDLSVVYR…PSYYFRTPEI (101 aa). Residues N151 and N182 are each glycosylated (N-linked (GlcNAc...) asparagine). The WSXWS motif signature appears at 217–221; it reads WSEWS. N-linked (GlcNAc...) asparagine glycosylation is found at N232 and N233. The chain crosses the membrane as a helical span at residues 240 to 264; that stretch reads PILLTISILSFFSVALLVILACVLW. At 265-459 the chain is on the cytoplasmic side; sequence KKRIKPIVWP…VTMSSFYQNQ (195 aa). The Box 1 motif motif lies at 272–280; the sequence is VWPSLPDHK. Residue T282 is modified to Phosphothreonine; by PKC.

Belongs to the type I cytokine receptor family. Type 4 subfamily. In terms of assembly, the IL7 receptor is a heterodimer of IL7R and IL2RG. The TSLP receptor is a heterodimer of CRLF2 and IL7R. Interacts with CD53. Post-translationally, N-glycosylated IL-7Ralpha binds IL7 300-fold more tightly than the unglycosylated form. In terms of processing, ubiquitinated by MARCHF8; leading to lysosomal degradation.

Its subcellular location is the cell membrane. The protein localises to the secreted. Receptor for interleukin-7. Also acts as a receptor for thymic stromal lymphopoietin (TSLP). This Homo sapiens (Human) protein is Interleukin-7 receptor subunit alpha (IL7R).